Consider the following 283-residue polypeptide: NAD kinase (283 aa).

The Proton acceptor role is filled by Asp-68. Residues 68 to 69 (DG), 142 to 143 (ND), Arg-153, Asp-172, 183 to 188 (TAYSLS), and Gln-242 contribute to the NAD(+) site.

Belongs to the NAD kinase family. A divalent metal cation serves as cofactor.

The protein resides in the cytoplasm. It catalyses the reaction NAD(+) + ATP = ADP + NADP(+) + H(+). In terms of biological role, involved in the regulation of the intracellular balance of NAD and NADP, and is a key enzyme in the biosynthesis of NADP. Catalyzes specifically the phosphorylation on 2'-hydroxyl of the adenosine moiety of NAD to yield NADP. The chain is NAD kinase from Caldanaerobacter subterraneus subsp. tengcongensis (strain DSM 15242 / JCM 11007 / NBRC 100824 / MB4) (Thermoanaerobacter tengcongensis).